The sequence spans 84 residues: Neurotoxin BmK-M11 (84 aa).

The first 19 residues, 1–19, serve as a signal peptide directing secretion; it reads MNYLVMISFALLLMTGVES. Residues 21 to 83 form the LCN-type CS-alpha/beta domain; it reads RDAYIAKPEN…VPIRVPGKCH (63 aa). 4 disulfides stabilise this stretch: C31–C82, C35–C55, C41–C65, and C45–C67. R84 is a propeptide (removed by a carboxypeptidase).

The protein belongs to the long (4 C-C) scorpion toxin superfamily. Sodium channel inhibitor family. Alpha subfamily. As to expression, expressed by the venom gland.

The protein localises to the secreted. In terms of biological role, alpha toxins bind voltage-independently at site-3 of sodium channels (Nav) and inhibit the inactivation of the activated channels, thereby blocking neuronal transmission. This recombinant toxin selectively inhibits the fast inactivation of mNav1.4/SCN4A (EC(50)=82.3 nM) (tested in HEK293 cells). The protein is Neurotoxin BmK-M11 of Olivierus martensii (Manchurian scorpion).